Consider the following 343-residue polypeptide: ATP-dependent (S)-NAD(P)H-hydrate dehydratase (343 aa).

Residues 1-42 (MAVHACGAAAAVVALLSAAIALQWSPLYAVLQRALSLHTAHA) constitute a mitochondrion transit peptide. Residues 49-340 (LFQLVRNIVP…TEVGTAFSRL (292 aa)) form the YjeF C-terminal domain. The residue at position 63 (Lys63) is an N6-acetyllysine. A Phosphotyrosine modification is found at Tyr81. Residues Gly149 and 202–208 (NHVEFSR) contribute to the (6S)-NADPHX site. Ser216 carries the phosphoserine modification. Residues 242–246 (KGEQD) and 261–270 (GSSRRCGGQG) contribute to the ATP site. Residue Asp271 coordinates (6S)-NADPHX.

It belongs to the NnrD/CARKD family. Mg(2+) is required as a cofactor.

It localises to the mitochondrion. The enzyme catalyses (6S)-NADHX + ATP = ADP + phosphate + NADH + H(+). It catalyses the reaction (6S)-NADPHX + ATP = ADP + phosphate + NADPH + H(+). Its function is as follows. Catalyzes the dehydration of the S-form of NAD(P)HX at the expense of ATP, which is converted to ADP. Together with NAD(P)HX epimerase, which catalyzes the epimerization of the S- and R-forms, the enzyme allows the repair of both epimers of NAD(P)HX, a damaged form of NAD(P)H that is a result of enzymatic or heat-dependent hydration. The protein is ATP-dependent (S)-NAD(P)H-hydrate dehydratase of Mus musculus (Mouse).